The primary structure comprises 103 residues: Large ribosomal subunit protein bL21 (103 aa).

This sequence belongs to the bacterial ribosomal protein bL21 family. Part of the 50S ribosomal subunit. Contacts protein L20.

This protein binds to 23S rRNA in the presence of protein L20. The protein is Large ribosomal subunit protein bL21 of Nitrosospira multiformis (strain ATCC 25196 / NCIMB 11849 / C 71).